The primary structure comprises 121 residues: SSKDSKQLDAEVHRKYIYGGHVAAYMNILMEDEPEKYQSHFSSYIKADLAPDNIEEMYKKVHAAIRPDPSPKKSQKQPPKTHKRYNLKKLTYEERKAKLIERLNALNAAGGNDDDDEEDDE.

The disordered stretch occupies residues 63–88 (AAIRPDPSPKKSQKQPPKTHKRYNLK). Residues 73–87 (KSQKQPPKTHKRYNL) are compositionally biased toward basic residues.

This sequence belongs to the universal ribosomal protein uL18 family. In terms of assembly, component of the large ribosomal subunit (LSU).

The protein localises to the cytoplasm. It localises to the nucleus. Functionally, component of the ribosome, a large ribonucleoprotein complex responsible for the synthesis of proteins in the cell. The small ribosomal subunit (SSU) binds messenger RNAs (mRNAs) and translates the encoded message by selecting cognate aminoacyl-transfer RNA (tRNA) molecules. The large subunit (LSU) contains the ribosomal catalytic site termed the peptidyl transferase center (PTC), which catalyzes the formation of peptide bonds, thereby polymerizing the amino acids delivered by tRNAs into a polypeptide chain. The nascent polypeptides leave the ribosome through a tunnel in the LSU and interact with protein factors that function in enzymatic processing, targeting, and the membrane insertion of nascent chains at the exit of the ribosomal tunnel. This chain is Large ribosomal subunit protein uL18 (RPL5), found in Solanum melongena (Eggplant).